The sequence spans 232 residues: Cytidylate kinase (232 aa).

19–27 lines the ATP pocket; it reads GPAGVGKTT.

The protein belongs to the cytidylate kinase family. Type 1 subfamily.

Its subcellular location is the cytoplasm. It carries out the reaction CMP + ATP = CDP + ADP. It catalyses the reaction dCMP + ATP = dCDP + ADP. This Nitratidesulfovibrio vulgaris (strain DP4) (Desulfovibrio vulgaris) protein is Cytidylate kinase.